A 49-amino-acid polypeptide reads, in one-letter code: Large ribosomal subunit protein bL36 (49 aa).

This sequence belongs to the bacterial ribosomal protein bL36 family.

This chain is Large ribosomal subunit protein bL36, found in Pseudomonas fluorescens (strain ATCC BAA-477 / NRRL B-23932 / Pf-5).